The sequence spans 103 residues: Large ribosomal subunit protein bL21 (103 aa).

Belongs to the bacterial ribosomal protein bL21 family. Part of the 50S ribosomal subunit. Contacts protein L20.

Its function is as follows. This protein binds to 23S rRNA in the presence of protein L20. The polypeptide is Large ribosomal subunit protein bL21 (Herminiimonas arsenicoxydans).